We begin with the raw amino-acid sequence, 427 residues long: MSVSFEAKETNRGVLTFTIGQDAIKPELDRVFNKVKKDINLPGFRKGHLPRAVFNQKFGEEALYQDVVNALLPAAYEAAVAEAGLEVVAQPKIDVVSMEKGQDWTITAEVVTKPEVKLGDYKNLAVSVEATKEVTDEEVDAKIEAARNNLAELVIKEGPAAEGDTVVIDFVGSIDGVEFDGGKGENFSLGLGSGQFIPGFEAQLVGHAAGEEVNVEVTFPEDYQAADLAGKQALFVTKIHEVKAKEVPALDDELAKDIDEEVETLDELKAKYRKELEASKEVAFDDAVESAALELAVENAEIVELPEEMIHEEVHRAINEFLGGMQQQGISPDMYFQITGTTREDLHKQYEADAEKRTKTNLVVEAVAKAEGFEATEEEINKEIEDLAATYNMEVAQVRSLLSPEMLKHDIAVKKAVEVITSTATVK.

The 86-residue stretch at 163–248 folds into the PPIase FKBP-type domain; that stretch reads GDTVVIDFVG…IHEVKAKEVP (86 aa).

This sequence belongs to the FKBP-type PPIase family. Tig subfamily.

The protein localises to the cytoplasm. It carries out the reaction [protein]-peptidylproline (omega=180) = [protein]-peptidylproline (omega=0). Its function is as follows. Involved in protein export. Acts as a chaperone by maintaining the newly synthesized protein in an open conformation. Functions as a peptidyl-prolyl cis-trans isomerase. The chain is Trigger factor from Streptococcus suis (strain 05ZYH33).